A 426-amino-acid chain; its full sequence is Tol-Pal system protein TolB (426 aa).

The first 24 residues, 1 to 24 (MKLKSRFTSIIGVITLFFSQTVTA), serve as a signal peptide directing secretion.

The protein belongs to the TolB family. The Tol-Pal system is composed of five core proteins: the inner membrane proteins TolA, TolQ and TolR, the periplasmic protein TolB and the outer membrane protein Pal. They form a network linking the inner and outer membranes and the peptidoglycan layer.

The protein resides in the periplasm. Part of the Tol-Pal system, which plays a role in outer membrane invagination during cell division and is important for maintaining outer membrane integrity. This Actinobacillus pleuropneumoniae serotype 3 (strain JL03) protein is Tol-Pal system protein TolB.